A 402-amino-acid polypeptide reads, in one-letter code: Protein FixF (402 aa).

This is Protein FixF (fixF) from Sinorhizobium fredii (strain NBRC 101917 / NGR234).